Reading from the N-terminus, the 64-residue chain is MNAKEMRGKEAAELKQELESLLRAHFALRMQVATQQSNKTADLGKLRRDIARVKTIMREKAGQA.

This sequence belongs to the universal ribosomal protein uL29 family.

The polypeptide is Large ribosomal subunit protein uL29 (Thiobacillus denitrificans (strain ATCC 25259 / T1)).